A 314-amino-acid chain; its full sequence is Dihydroorotate dehydrogenase (fumarate) (314 aa).

Substrate contacts are provided by residues lysine 46, 70 to 74, and asparagine 130; that span reads NSMGL. 46–47 is a binding site for FMN; it reads KS. Asparagine 130 contacts FMN. Residues serine 132 and cysteine 133 each act as nucleophile in the active site. Lysine 167 and isoleucine 195 together coordinate FMN. 196–197 is a binding site for substrate; that stretch reads NS. FMN-binding positions include glycine 224, 252-253, and 274-275; these read GG and GT.

The protein belongs to the dihydroorotate dehydrogenase family. Type 1 subfamily. In terms of assembly, homodimer. It depends on FMN as a cofactor.

The protein localises to the cytoplasm. The catalysed reaction is (S)-dihydroorotate + fumarate = orotate + succinate. It participates in pyrimidine metabolism; UMP biosynthesis via de novo pathway. Its activity is regulated as follows. The activity is independent of the presence of oxygen. Its function is as follows. Catalyzes the conversion of dihydroorotate to orotate with fumarate as the electron acceptor. In Lachancea kluyveri (strain ATCC 58438 / CBS 3082 / BCRC 21498 / NBRC 1685 / JCM 7257 / NCYC 543 / NRRL Y-12651) (Yeast), this protein is Dihydroorotate dehydrogenase (fumarate) (URA1).